The following is a 534-amino-acid chain: Glycerophosphodiester transporter GIT2 (534 aa).

Helical transmembrane passes span 63-83 (GAGLFADGYVNNSIGIVMACL), 96-116 (AISNIGSIGFVGTVVGQLSFG), 135-155 (LIAFTLLCAVGSWGTTIQGFF), 163-183 (FCLGVAIGAEYPTSSVIASEF), 202-222 (FMIDFGFVVSAFVPFVLLWIF), 230-250 (LWRVSIGLGAILPTALFFIRL), 289-309 (MIWFIYNFSVYSFGTFNAIIL), 322-342 (WGWSVVFNLFYIPGSFLGAFS), 350-370 (LTLAIGVGLQGIIGFIMSACL), 377-397 (VAAFTVVFGIFATLGEFGPGG), 417-437 (GIAAAMGKIGAFVGTWIFPAI), and 453-473 (VPFYLSSGLCIFSALLTFFLC).

This sequence belongs to the major facilitator superfamily. Sugar transporter (TC 2.A.1.1) family.

The protein resides in the cell membrane. Its function is as follows. Probable glycerophosphodiester transporter. Does not possess detectable glycerophosphoinositol (GroPIns) transport activity. Might be involved in the uptake of glycerophosphocholine (GroPCho). The expanded ability to utilize GroPIns and GroPCho results from the organism's pathogenic nature and its need to occupy a variety of environments within its host organism. This possibility is buttressed by the fact that GroPIns and GroPCho are present and abundant in human fluids. The protein is Glycerophosphodiester transporter GIT2 of Candida albicans (strain SC5314 / ATCC MYA-2876) (Yeast).